A 134-amino-acid polypeptide reads, in one-letter code: Replication enhancer protein (134 aa).

Belongs to the geminiviridae replication enhancer protein family. As to quaternary structure, homooligomer. Interacts with the replication-associated protein (REP). Interacts with host proliferating cell nuclear antigen (PCNA). Interacts with host retinoblastoma-related protein 1 (RBR1), and may thereby deregulate the host cell cycle. Oligomerization and interaction with PCNA are necessary for optimal replication enhancement.

Its function is as follows. Increases viral DNA accumulation. Enhances infectivity and symptom expression. The protein is Replication enhancer protein of Tomato yellow leaf curl Sardinia virus (TYLCSV).